A 942-amino-acid polypeptide reads, in one-letter code: Mitogen-activated protein kinase kinase kinase A (942 aa).

The PB1 domain occupies 15-96 (FIRIKCILGD…NPTKIISTKF (82 aa)). The disordered stretch occupies residues 107–144 (PLSSSLSPTQSLILNNNNNNNNNNNNNNNNNNNNNNNN). Residues 170–429 (WQKGQILGRG…ANQLLKHPFI (260 aa)) enclose the Protein kinase domain. Residues 176–184 (LGRGGYGSV) and Lys199 contribute to the ATP site. The Proton acceptor role is filled by Asp297. Residues 441–486 (ISPTTTLSTNTTNTTATTTTTNNATNSNINQQQQQQQQQPPTRTQR) are compositionally biased toward low complexity. The segment at 441-512 (ISPTTTLSTN…ISTSTSSSSS (72 aa)) is disordered. Residues 487 to 498 (VSISAGSSNNKR) show a composition bias toward polar residues. The span at 500–512 (TPPISTSTSSSSS) shows a compositional bias: low complexity. A helical transmembrane segment spans residues 513 to 533 (SILNNFSINIILPINLIILIF). The F-box domain maps to 518 to 564 (FSINIILPINLIILIFREIKPNFVNTLSRVCKHWKQIIDDDELWNKY). WD repeat units lie at residues 607–646 (GHDKGVFCVKLIDDQGMVLSGGEDKKLKVWDISGNHHHNH), 690–733 (GHSG…TLFT), 736–778 (NHQE…STLR), 780–825 (HTGG…KVRS), 828–865 (QHTEDVLCCYVFDQKVVTGSCDGTIKLWDIGTGKTIST), 872–909 (RQKNYVWTVQFDQSKIISSGKTGIIRIWDIYNERDSRS), and 912–942 (GHHETIFSLQFNNQKLITGSLDKLVKIWSID).

Belongs to the protein kinase superfamily. STE Ser/Thr protein kinase family. MAP kinase kinase kinase subfamily. In terms of assembly, interacts with ubcB and ubpB. Mg(2+) serves as cofactor. Post-translationally, ubcB and ubpB differentially control ubiquitination/deubiquitination and degradation in a cell-type-specific and temporally regulated manner.

The protein resides in the membrane. It catalyses the reaction L-seryl-[protein] + ATP = O-phospho-L-seryl-[protein] + ADP + H(+). The catalysed reaction is L-threonyl-[protein] + ATP = O-phospho-L-threonyl-[protein] + ADP + H(+). In terms of biological role, regulates cell-type differentiation and spatial patterning, required for the proper induction and maintenance of prespore cell differentiation. This Dictyostelium discoideum (Social amoeba) protein is Mitogen-activated protein kinase kinase kinase A.